We begin with the raw amino-acid sequence, 835 residues long: Neuroligin-2 (835 aa).

A signal peptide spans 1-14 (MWLLALCLVGLAGA). The Extracellular portion of the chain corresponds to 15 to 677 (QRGGGGPGGG…DSRDYSTELS (663 aa)). 2 N-linked (GlcNAc...) asparagine glycosylation sites follow: N98 and N136. Disulfide bonds link C106-C141, C317-C328, and C487-C521. N-linked (GlcNAc...) asparagine glycosylation occurs at N522. The disordered stretch occupies residues 623–668 (PPYATRWPPRPPAGAPGTRRPPPPATLPPEPEPEPGPRAYDRFPGD). Residues 630–658 (PPRPPAGAPGTRRPPPPATLPPEPEPEPG) show a composition bias toward pro residues. A helical transmembrane segment spans residues 678–698 (VTVAVGASLLFLNILAFAALY). Positions 678–698 (VTVAVGASLLFLNILAFAALY) are required for interaction with LHFPL4. Residues 699–835 (YKRDRRQELR…LPHPHSTTRV (137 aa)) are Cytoplasmic-facing. Residues S713 and S718 each carry the phosphoserine modification. The tract at residues 790–835 (LLPSGLGPPPPPPPPSLHPFGPFPPPPPTATSHNNTLPHPHSTTRV) is disordered. A compositionally biased stretch (pro residues) spans 795-818 (LGPPPPPPPPSLHPFGPFPPPPPT). Residues 823–835 (NNTLPHPHSTTRV) show a composition bias toward polar residues.

This sequence belongs to the type-B carboxylesterase/lipase family. In terms of assembly, interacts with neurexins NRXN1, NRXN2 and NRXN3. Interaction with neurexins is mediated by heparan sulfate glycan modification on neurexin. Interacts (via its C-terminus) with DLG4/PSD-95 (via PDZ domain 3). Interacts with PATJ. Interacts with GPHN. Interacts with MDGA1 and MDGA2. Found in a complex with MAGI2 and IGSF9B, where it interacts with MAGI2 (via WW 1, WW 2 and PDZ 2 domains). Identified in a complex of 720 kDa composed of LHFPL4, NLGN2, GABRA1, GABRB2, GABRG2 and GABRB3. Interacts with LHFPL4; leading to mutual regulation of the protein level and synaptic clustering. Interacts with NLGN2. Expressed in the blood vessel walls. Detected in colon, brain and pancreas islets of Langerhans (at protein level). Detected in brain, and at lower levels in pancreas islet beta cells.

It localises to the cell membrane. The protein resides in the postsynaptic cell membrane. It is found in the presynaptic cell membrane. Functionally, transmembrane scaffolding protein involved in cell-cell interactions via its interactions with neurexin family members. Mediates cell-cell interactions both in neurons and in other types of cells, such as Langerhans beta cells. Plays a role in synapse function and synaptic signal transmission, especially via gamma-aminobutyric acid receptors (GABA(A) receptors). Functions by recruiting and clustering synaptic proteins. Promotes clustering of postsynaptic GABRG2 and GPHN. Promotes clustering of postsynaptic LHFPL4. Modulates signaling by inhibitory synapses, and thereby plays a role in controlling the ratio of signaling by excitatory and inhibitory synapses and information processing. Required for normal signal amplitude from inhibitory synapses, but is not essential for normal signal frequency. May promote the initial formation of synapses, but is not essential for this. In vitro, triggers the de novo formation of presynaptic structures. Mediates cell-cell interactions between Langerhans beta cells and modulates insulin secretion. The sequence is that of Neuroligin-2 (NLGN2) from Homo sapiens (Human).